We begin with the raw amino-acid sequence, 475 residues long: BTB/POZ domain-containing protein 10 (475 aa).

Residues 1–143 (MAGRPHPYDG…SSQSSSDGSC (143 aa)) are disordered. Residues 22–31 (LHSRPRKLYK) show a composition bias toward basic residues. Positions 57–80 (GHERSRDRRRSSDRSRDSSHERTE) are enriched in basic and acidic residues. Positions 81–94 (SQLTPCIRNVTSPT) are enriched in polar residues. The span at 97–107 (HHVEREKDHSS) shows a compositional bias: basic and acidic residues. The span at 108–142 (SRPSSPRPQKASPNGSISSAGNSSRNSSQSSSDGS) shows a compositional bias: low complexity. The segment at 146–475 (AGEMVFVYEN…LDPDAQNPML (330 aa)) is interaction with AKT family members. In terms of domain architecture, BTB spans 167 to 241 (ERVTLIVDNT…YKTGIIRCPD (75 aa)). Residues 455-475 (LPIHPPSGNSDLDPDAQNPML) form a disordered region.

Interacts (via C-terminal 330-amino-acid region) with AKT1; AKT2 and AKT3. Interacts with PPP2CA and PPP1CA. Ubiquitously expressed. Highly expressed in adult brain, testis, aorta and small intestine and weakly expressed in the heart, lung, liver, kidney, pancreas, spleen, thymus, prostate, ovary and colon. Down-regulated in glioma.

It is found in the nucleus. The protein localises to the cytoplasm. Functionally, plays a major role as an activator of AKT family members by inhibiting PPP2CA-mediated dephosphorylation, thereby keeping AKTs activated. Plays a role in preventing motor neuronal death and accelerating the growth of pancreatic beta cells. This chain is BTB/POZ domain-containing protein 10 (BTBD10), found in Homo sapiens (Human).